Here is a 1072-residue protein sequence, read N- to C-terminus: Carbamoyl phosphate synthase large chain (1072 aa).

The interval 1 to 401 is carboxyphosphate synthetic domain; sequence MPKRLDINTI…SLLKAVRSLE (401 aa). ATP is bound by residues arginine 129, arginine 169, glycine 175, glycine 176, lysine 208, isoleucine 210, glutamate 215, glycine 241, valine 242, histidine 243, glutamine 284, and glutamate 298. The region spanning 133 to 327 is the ATP-grasp 1 domain; sequence RTLMQDLNEP…IAKLAAKIAV (195 aa). Mg(2+)-binding residues include glutamine 284, glutamate 298, and asparagine 300. Residues glutamine 284, glutamate 298, and asparagine 300 each contribute to the Mn(2+) site. The segment at 402-546 is oligomerization domain; sequence LGIYHLELDH…YSTYAEENES (145 aa). Positions 547–929 are carbamoyl phosphate synthetic domain; it reads IVTDRKSVVV…ALYKGLVASG (383 aa). Residues 671–861 form the ATP-grasp 2 domain; sequence EAALTKLGIP…MANVATKVIL (191 aa). Residues arginine 707, arginine 746, glutamate 752, glycine 777, valine 778, histidine 779, serine 780, glutamine 820, and glutamate 832 each contribute to the ATP site. 3 residues coordinate Mg(2+): glutamine 820, glutamate 832, and asparagine 834. The Mn(2+) site is built by glutamine 820, glutamate 832, and asparagine 834. An MGS-like domain is found at 930 to 1072; it reads INIPTHGSVI…QTKRHEVVHA (143 aa). The tract at residues 930–1072 is allosteric domain; that stretch reads INIPTHGSVI…QTKRHEVVHA (143 aa).

This sequence belongs to the CarB family. In terms of assembly, composed of two chains; the small (or glutamine) chain promotes the hydrolysis of glutamine to ammonia, which is used by the large (or ammonia) chain to synthesize carbamoyl phosphate. Tetramer of heterodimers (alpha,beta)4. The cofactor is Mg(2+). Mn(2+) is required as a cofactor.

The catalysed reaction is hydrogencarbonate + L-glutamine + 2 ATP + H2O = carbamoyl phosphate + L-glutamate + 2 ADP + phosphate + 2 H(+). The enzyme catalyses hydrogencarbonate + NH4(+) + 2 ATP = carbamoyl phosphate + 2 ADP + phosphate + 2 H(+). The protein operates within amino-acid biosynthesis; L-arginine biosynthesis; carbamoyl phosphate from bicarbonate: step 1/1. It participates in pyrimidine metabolism; UMP biosynthesis via de novo pathway; (S)-dihydroorotate from bicarbonate: step 1/3. In terms of biological role, large subunit of the glutamine-dependent carbamoyl phosphate synthetase (CPSase). CPSase catalyzes the formation of carbamoyl phosphate from the ammonia moiety of glutamine, carbonate, and phosphate donated by ATP, constituting the first step of 2 biosynthetic pathways, one leading to arginine and/or urea and the other to pyrimidine nucleotides. The large subunit (synthetase) binds the substrates ammonia (free or transferred from glutamine from the small subunit), hydrogencarbonate and ATP and carries out an ATP-coupled ligase reaction, activating hydrogencarbonate by forming carboxy phosphate which reacts with ammonia to form carbamoyl phosphate. In Bacillus cereus (strain ATCC 10987 / NRS 248), this protein is Carbamoyl phosphate synthase large chain.